An 88-amino-acid chain; its full sequence is Small ribosomal subunit protein bS16c (88 aa).

The protein belongs to the bacterial ribosomal protein bS16 family.

It localises to the plastid. The protein localises to the chloroplast. The sequence is that of Small ribosomal subunit protein bS16c from Lactuca sativa (Garden lettuce).